A 346-amino-acid chain; its full sequence is GTPase Obg (346 aa).

The Obg domain maps to 1–159; the sequence is MRFVDEVTFV…RELRLELQLL (159 aa). The interval 128–148 is disordered; the sequence is LHFKSSTNRAPRQSTEGTAGE. Positions 130 to 144 are enriched in polar residues; it reads FKSSTNRAPRQSTEG. An OBG-type G domain is found at 160 to 335; it reads ADVGLLGMPN…LCGDIMNDLE (176 aa). GTP is bound by residues 166–173, 191–195, 213–216, 285–288, and 316–318; these read GMPNVGKS, FTTLY, DIPG, NRLD, and SGL. 2 residues coordinate Mg(2+): Ser-173 and Thr-193.

Belongs to the TRAFAC class OBG-HflX-like GTPase superfamily. OBG GTPase family. Monomer. Mg(2+) is required as a cofactor.

The protein resides in the cytoplasm. Its function is as follows. An essential GTPase which binds GTP, GDP and possibly (p)ppGpp with moderate affinity, with high nucleotide exchange rates and a fairly low GTP hydrolysis rate. Plays a role in control of the cell cycle, stress response, ribosome biogenesis and in those bacteria that undergo differentiation, in morphogenesis control. The polypeptide is GTPase Obg (Halorhodospira halophila (strain DSM 244 / SL1) (Ectothiorhodospira halophila (strain DSM 244 / SL1))).